The chain runs to 704 residues: Elongation factor G (704 aa).

Residues Lys10 to Met286 enclose the tr-type G domain. Residues Ala19–Thr26, Asp83–His87, and Asn137–Asp140 contribute to the GTP site.

Belongs to the TRAFAC class translation factor GTPase superfamily. Classic translation factor GTPase family. EF-G/EF-2 subfamily.

The protein localises to the cytoplasm. Its function is as follows. Catalyzes the GTP-dependent ribosomal translocation step during translation elongation. During this step, the ribosome changes from the pre-translocational (PRE) to the post-translocational (POST) state as the newly formed A-site-bound peptidyl-tRNA and P-site-bound deacylated tRNA move to the P and E sites, respectively. Catalyzes the coordinated movement of the two tRNA molecules, the mRNA and conformational changes in the ribosome. This Corynebacterium jeikeium (strain K411) protein is Elongation factor G.